The following is a 629-amino-acid chain: tRNA uridine 5-carboxymethylaminomethyl modification enzyme MnmG (629 aa).

Residues 15-20, valine 127, and serine 182 contribute to the FAD site; that span reads GAGHAG. Residues 203-226 form a disordered region; the sequence is TPPRVKSSTIDYSKTEEQPGDDHP. Over residues 215-226 the composition is skewed to basic and acidic residues; the sequence is SKTEEQPGDDHP. 274 to 288 contributes to the NAD(+) binding site; it reads GARYCPSIEDKIVRF. Glutamine 371 serves as a coordination point for FAD.

The protein belongs to the MnmG family. Homodimer. Heterotetramer of two MnmE and two MnmG subunits. FAD serves as cofactor.

It localises to the cytoplasm. Functionally, NAD-binding protein involved in the addition of a carboxymethylaminomethyl (cmnm) group at the wobble position (U34) of certain tRNAs, forming tRNA-cmnm(5)s(2)U34. This chain is tRNA uridine 5-carboxymethylaminomethyl modification enzyme MnmG, found in Listeria monocytogenes serovar 1/2a (strain ATCC BAA-679 / EGD-e).